The primary structure comprises 500 residues: Maturase K (500 aa).

Belongs to the intron maturase 2 family. MatK subfamily.

It localises to the plastid. It is found in the chloroplast. In terms of biological role, usually encoded in the trnK tRNA gene intron. Probably assists in splicing its own and other chloroplast group II introns. The polypeptide is Maturase K (Fragaria vesca (Woodland strawberry)).